The chain runs to 1385 residues: MPQTYAGQKRIRKFYGKIREVLEMPNLIEVQKSSYDLFLKSGDQLEPMDGEGIKGVFQSVFPIKDFNETAILEFVKYELETPKFDVEECQQRDLTYAAPLKVTLRLIVFDIDEDTGAKSVKDIKEQDVFMGDMPLMTPNGTFVVNGTERVIVSQMHRSPGVFFDHDKGKTHSSGKLLFACRIIPYRGSWLDFEFDAKDIVFSRIDRRRKLPVTTLLYALGLDQEGIMDAYYDTVTFKMVKNKGWSTKFFPERVRGTRPTTDLVDAKTGEVIAEAGKKVTPRAVKKWIDEGSIENLLVPFDGIVGRFAAKDIINEETGAIYVEAGDELTWELDKAGEVSGGTLKELIDAGITEIPVLDIDNVNVGPYMRNTLAVDKNLNRESALMDIYRVMRPGEPPTVEAASNLFDQLFFDSERYDLSAVGRVKMNMRLDLDAEDTMRTLRKEDIISCIKALVELRDGRGDIDDIDHLGNRRVRSVGELMENQYRVGLLRMERAIKERMSSVEIDTVMPQDLINAKPAAAAVREFFGSSQLSQFMDQTNPLSEVTHKRRLSALGPGGLTRERAGFEVRDVHPTHYGRMCPIETPEGPNIGLINSLATYARVNKYGFIETPYRRVNDAVVSDDVVYMSATEEMRHTVAQANANLDDDGKFVNDMVNTRMSGEYTLNPREAIDLIDVSPKQLVSVAASLIPFLENDDANRALMGSNMQRQAVPLLQADAPFVGTGIESVVAKDSGAAIMAKRGGVIDQVDAQRIVIRATEDLELGDAGVDIYRLRKFQRSNQNTCINQRPLVKVGDKIGKGEVIADGPSTDIGELALGKNVIVAFMPWNGYNYEDSILISERISRDDVFTSIHIEEFEVAARDTKLGPEEITRDIPNVGEEALRNLDEAGIVYIGAEVEPGDILVGKITPKGESPMTPEEKLLRAIFGEKASDVRDTSLRVKPGDYGTIVEVRVFNRHGVEKDERALQIEREEVERLARDRDDELVILERNIYARLRGMIMGKTAVKGPKGVKPNTVIDEDLLDGQLSRGQWWQLALEDEKDAAHIEALNQQFDTQKRALDHRFEDKVEKVRRGDDLPPGVMKMVKVFIAVKRKLQPGDKMAGRHGNKGVISKVVPMEDMPFLADGTPVDFVLNPLGVPSRMNVGQILETHMGWAARGMGLQIDEALDEYRRSGDMTPVRDALKIAYGDDVYDDAFADRDEESLLEAAGNVTKGVPIATPVFDGAKEADVNDALIRAGFSTSGQSKLFDGRTGEQFAREVTVGVKYLLKLHHLVDDKIHARSTGPYSLVTQQPLGGKAQFGGQRFGEMEVWALEAYGAAYTLQEMLTVKSDDVAGRTKVYESIVKGEDNFEAGVPESFNVLVKEVRGLGLNMELLDAEDDEGGIAAE.

Belongs to the RNA polymerase beta chain family. As to quaternary structure, the RNAP catalytic core consists of 2 alpha, 1 beta, 1 beta' and 1 omega subunit. When a sigma factor is associated with the core the holoenzyme is formed, which can initiate transcription.

It catalyses the reaction RNA(n) + a ribonucleoside 5'-triphosphate = RNA(n+1) + diphosphate. Its function is as follows. DNA-dependent RNA polymerase catalyzes the transcription of DNA into RNA using the four ribonucleoside triphosphates as substrates. The sequence is that of DNA-directed RNA polymerase subunit beta from Jannaschia sp. (strain CCS1).